The primary structure comprises 488 residues: Auxin transporter-like protein 1 (488 aa).

The interval 1–36 is disordered; sequence MSGEKQAEESIVVSGEDEVAGRKVEDSAAEEDIDGN. Topologically, residues 1–64 are cytoplasmic; it reads MSGEKQAEES…DAWFSCASNQ (64 aa). Residues 65 to 82 form a helical membrane-spanning segment; it reads VAQVLLTLPYSFSQLGML. The Extracellular segment spans residues 83-84; the sequence is SG. Residues 85 to 105 traverse the membrane as a helical segment; sequence ILLQIFYGLMGSWTAYLISVL. Over 106–141 the chain is Cytoplasmic; that stretch reads YVEYRARMEKQEAKSFKNHVIQWFEVLDGLLGPYWK. The helical transmembrane segment at 142-162 threads the bilayer; sequence AAGLAFNCTFLLFGSVIQLIA. The Extracellular segment spans residues 163–178; it reads CASNIYYINDRLDKRT. A helical transmembrane segment spans residues 179-199; that stretch reads WTYIFGACCATTVFIPSFHNY. The Cytoplasmic segment spans residues 200 to 202; the sequence is RIW. The helical transmembrane segment at 203-223 threads the bilayer; it reads SFLGLGMTTYTAWYLTIASFL. Topologically, residues 224-238 are extracellular; it reads HGQAEGVTHSGPTKL. The chain crosses the membrane as a helical span at residues 239-259; sequence VLYFTGATNILYTFGGHAVTV. Over 260–273 the chain is Cytoplasmic; that stretch reads EIMHAMWKPRKFKS. Residues 274–294 form a helical membrane-spanning segment; the sequence is IYLMATLYVFTLTLPSASAVY. Residues 295–320 are Extracellular-facing; the sequence is WAFGDQLLNHSNAFSLLPKTRFRDTA. N-linked (GlcNAc...) asparagine glycosylation is present at N303. A helical membrane pass occupies residues 321–341; that stretch reads VILMLIHQFITFGFACTPLYF. At 342–362 the chain is on the cytoplasmic side; that stretch reads VWEKAIGMHHTKSLCLRALVR. Residues 363–383 form a helical membrane-spanning segment; the sequence is LPVVVPIWFLAIIFPFFGPIN. Position 384 (S384) is a topological domain, extracellular. The helical transmembrane segment at 385 to 405 threads the bilayer; it reads AVGALLVTFTVYIIPALAHML. The Cytoplasmic segment spans residues 406-427; it reads TYRTASARRNAAEKPPFFIPSW. Residues 428 to 448 traverse the membrane as a helical segment; that stretch reads AGVYVINAFIVVWVLVLGFGF. Residues 449–488 are Extracellular-facing; the sequence is GGWASMTNFIRQIDTFGLFAKCYQCKPPPAPIAAGAHHRR.

The protein belongs to the amino acid/polyamine transporter 2 family. Amino acid/auxin permease (AAAP) (TC 2.A.18.1) subfamily.

Its subcellular location is the cell membrane. Its function is as follows. Carrier protein involved in proton-driven auxin influx. Mediates the formation of auxin gradient from developing leaves (site of auxin biosynthesis) to tips by contributing to the loading of auxin in vascular tissues and facilitating acropetal (base to tip) auxin transport within inner tissues of the root apex, and basipetal (tip to base) auxin transport within outer tissues of the root apex. In Arabidopsis thaliana (Mouse-ear cress), this protein is Auxin transporter-like protein 1 (LAX1).